We begin with the raw amino-acid sequence, 763 residues long: G protein-regulated inducer of neurite outgrowth 3 (763 aa).

Disordered regions lie at residues 1 to 48 (MGTV…IGNV), 65 to 111 (QACV…APGL), and 192 to 268 (ENSQ…GATC). The segment covering 27–44 (ESQSVSPQPAQPDNNASG) has biased composition (polar residues). Residues 93–104 (KTPDDFLLHGSK) show a composition bias toward basic and acidic residues. Residues 237–250 (ENKQPSATALNTTA) are compositionally biased toward polar residues. Phosphoserine occurs at positions 323 and 359. Disordered regions lie at residues 420–452 (TSSQNTETEEDLRLSASKEATSRQPEGTNPDFQ), 471–624 (NQGL…PRRG), and 711–737 (VKTQSGQTRRSISSDSSSSKKLKGRQH). The segment covering 437–450 (KEATSRQPEGTNPD) has biased composition (polar residues). 2 stretches are compositionally biased toward basic and acidic residues: residues 480 to 496 (REPEIVVKTAKDHKAES) and 518 to 539 (PTDKKGAKDKKPASPLIVKDHA). Low complexity predominate over residues 593–609 (SLSLPSDGTGDSSPGSG).

In terms of biological role, may be involved in neurite outgrowth. This Mus musculus (Mouse) protein is G protein-regulated inducer of neurite outgrowth 3 (Gprin3).